A 183-amino-acid polypeptide reads, in one-letter code: Ribosome-recycling factor (183 aa).

It belongs to the RRF family.

The protein resides in the cytoplasm. Its function is as follows. Responsible for the release of ribosomes from messenger RNA at the termination of protein biosynthesis. May increase the efficiency of translation by recycling ribosomes from one round of translation to another. This Ureaplasma parvum serovar 3 (strain ATCC 27815 / 27 / NCTC 11736) protein is Ribosome-recycling factor.